The sequence spans 442 residues: Armadillo-like helical domain containing protein 1 (442 aa).

The protein is Armadillo-like helical domain containing protein 1 of Bos taurus (Bovine).